Here is a 210-residue protein sequence, read N- to C-terminus: Na(+)-translocating NADH-quinone reductase subunit D (210 aa).

The next 6 membrane-spanning stretches (helical) occupy residues 14 to 34 (PIVSNNPIALQVLGVCSALAV), 42 to 62 (LVMTIALTVVCAFSNLFISIL), 72 to 92 (IIVQMTIIASLVIVVDQVLQA), 103 to 123 (VFVGLIITNCIVMGRAEAYAM), 131 to 151 (FMDGIGNGIGYGAILLSVGFI), and 178 to 198 (NGLLLLPPSAFFLIGMLIWII).

Belongs to the NqrDE/RnfAE family. As to quaternary structure, composed of six subunits; NqrA, NqrB, NqrC, NqrD, NqrE and NqrF.

The protein resides in the cell inner membrane. The enzyme catalyses a ubiquinone + n Na(+)(in) + NADH + H(+) = a ubiquinol + n Na(+)(out) + NAD(+). Its function is as follows. NQR complex catalyzes the reduction of ubiquinone-1 to ubiquinol by two successive reactions, coupled with the transport of Na(+) ions from the cytoplasm to the periplasm. NqrA to NqrE are probably involved in the second step, the conversion of ubisemiquinone to ubiquinol. In Shewanella halifaxensis (strain HAW-EB4), this protein is Na(+)-translocating NADH-quinone reductase subunit D.